We begin with the raw amino-acid sequence, 303 residues long: N-acetyl-D-glucosamine kinase (303 aa).

Residues 4-11 (GFDIGGTK) and 133-140 (GVGGGLVL) contribute to the ATP site. Residues histidine 157, cysteine 177, cysteine 179, and cysteine 184 each coordinate Zn(2+).

Belongs to the ROK (NagC/XylR) family. NagK subfamily.

It carries out the reaction N-acetyl-D-glucosamine + ATP = N-acetyl-D-glucosamine 6-phosphate + ADP + H(+). It functions in the pathway cell wall biogenesis; peptidoglycan recycling. In terms of biological role, catalyzes the phosphorylation of N-acetyl-D-glucosamine (GlcNAc) derived from cell-wall degradation, yielding GlcNAc-6-P. This Salmonella dublin (strain CT_02021853) protein is N-acetyl-D-glucosamine kinase.